Consider the following 351-residue polypeptide: ATP-dependent protease ATP-binding subunit-like protein (351 aa).

A disordered region spans residues 1–26 (MPYITDMLRDRNSAATPPAEERSEPV). ATP is bound at residue 79-86 (GPTGVGKT).

The protein belongs to the ClpA/ClpB family.

In Rhodococcus erythropolis (Arthrobacter picolinophilus), this protein is ATP-dependent protease ATP-binding subunit-like protein.